The following is a 236-amino-acid chain: Ribose-5-phosphate isomerase A 2 (236 aa).

Residues 31 to 34, 86 to 89, and 99 to 102 each bind substrate; these read SGTT, DGPD, and KGGG. Glu108 functions as the Proton acceptor in the catalytic mechanism. Lys126 serves as a coordination point for substrate.

This sequence belongs to the ribose 5-phosphate isomerase family. As to quaternary structure, homodimer.

The catalysed reaction is aldehydo-D-ribose 5-phosphate = D-ribulose 5-phosphate. It functions in the pathway carbohydrate degradation; pentose phosphate pathway; D-ribose 5-phosphate from D-ribulose 5-phosphate (non-oxidative stage): step 1/1. Functionally, catalyzes the reversible conversion of ribose-5-phosphate to ribulose 5-phosphate. The protein is Ribose-5-phosphate isomerase A 2 of Yersinia pestis.